The primary structure comprises 113 residues: Mediator of RNA polymerase II transcription subunit 11 (113 aa).

It belongs to the Mediator complex subunit 11 family. Component of the Mediator complex.

It is found in the nucleus. Component of the Mediator complex, a coactivator involved in the regulated transcription of nearly all RNA polymerase II-dependent genes. Mediator functions as a bridge to convey information from gene-specific regulatory proteins to the basal RNA polymerase II transcription machinery. Mediator is recruited to promoters by direct interactions with regulatory proteins and serves as a scaffold for the assembly of a functional pre-initiation complex with RNA polymerase II and the general transcription factors. This chain is Mediator of RNA polymerase II transcription subunit 11 (MED11), found in Eremothecium gossypii (strain ATCC 10895 / CBS 109.51 / FGSC 9923 / NRRL Y-1056) (Yeast).